The primary structure comprises 690 residues: Glycine--tRNA ligase beta subunit (690 aa).

This sequence belongs to the class-II aminoacyl-tRNA synthetase family. Tetramer of two alpha and two beta subunits.

The protein localises to the cytoplasm. The catalysed reaction is tRNA(Gly) + glycine + ATP = glycyl-tRNA(Gly) + AMP + diphosphate. This Buchnera aphidicola subsp. Acyrthosiphon pisum (strain Tuc7) protein is Glycine--tRNA ligase beta subunit.